A 207-amino-acid chain; its full sequence is Ribonuclease HII (207 aa).

In terms of domain architecture, RNase H type-2 spans 20–207 (QLFAGVDEVG…KPVKRVLGIE (188 aa)). A divalent metal cation contacts are provided by aspartate 26, glutamate 27, and aspartate 118.

Belongs to the RNase HII family. The cofactor is Mn(2+). It depends on Mg(2+) as a cofactor.

The protein localises to the cytoplasm. It carries out the reaction Endonucleolytic cleavage to 5'-phosphomonoester.. Its function is as follows. Endonuclease that specifically degrades the RNA of RNA-DNA hybrids. The protein is Ribonuclease HII of Aliivibrio fischeri (strain ATCC 700601 / ES114) (Vibrio fischeri).